The primary structure comprises 335 residues: 1D-myo-inositol 2-acetamido-2-deoxy-alpha-D-glucopyranoside deacetylase (335 aa).

The Zn(2+) site is built by His19, Asp22, and His158.

This sequence belongs to the MshB deacetylase family. Zn(2+) is required as a cofactor.

The enzyme catalyses 1D-myo-inositol 2-acetamido-2-deoxy-alpha-D-glucopyranoside + H2O = 1D-myo-inositol 2-amino-2-deoxy-alpha-D-glucopyranoside + acetate. Functionally, catalyzes the deacetylation of 1D-myo-inositol 2-acetamido-2-deoxy-alpha-D-glucopyranoside (GlcNAc-Ins) in the mycothiol biosynthesis pathway. The protein is 1D-myo-inositol 2-acetamido-2-deoxy-alpha-D-glucopyranoside deacetylase of Corynebacterium urealyticum (strain ATCC 43042 / DSM 7109).